Reading from the N-terminus, the 728-residue chain is Catalase B (728 aa).

The signal sequence occupies residues 1 to 15; it reads MRLTFIPSLIGVANA. Positions 16–27 are excised as a propeptide; that stretch reads VCPYMTGELNRR. Residue H102 is part of the active site. N-linked (GlcNAc...) asparagine glycosylation is present at N120. N175 is a catalytic residue. Position 389 (Y389) interacts with heme. 2 N-linked (GlcNAc...) asparagine glycosylation sites follow: N448 and N551.

This sequence belongs to the catalase family. Homotetramer. It depends on heme as a cofactor. In terms of processing, N-glycosylated.

It is found in the secreted. The catalysed reaction is 2 H2O2 = O2 + 2 H2O. In terms of biological role, occurs in almost all aerobically respiring organisms and serves to protect cells from the toxic effects of hydrogen peroxide. This Aspergillus fumigatus (strain ATCC MYA-4609 / CBS 101355 / FGSC A1100 / Af293) (Neosartorya fumigata) protein is Catalase B (catB).